We begin with the raw amino-acid sequence, 646 residues long: Protein SENSITIVE TO UV 2 (646 aa).

Positions 42 to 70 (PAPPPSTKISSSLSHPMQLQSSAGQQRKQ) are disordered. Residues 48–70 (TKISSSLSHPMQLQSSAGQQRKQ) show a composition bias toward polar residues. The Nuclear localization signal signature appears at 119–126 (NRRCDSEK). The stretch at 123-157 (DSEKDLEIDRLKKELERVSKQLLDVEQECSQLKKG) forms a coiled coil. In terms of domain architecture, Phosphatase tensin-type spans 376 to 646 (KRTEQDVKQE…VFAFLGDNTI (271 aa)).

This sequence belongs to the serpin family. In terms of assembly, forms multimers through the coiled-coil domain. Probably phosphorylated by ATR. As to expression, accumulates throughout the root tip.

It is found in the nucleus. The protein resides in the cytoplasm. In terms of biological role, required for tolerance to DNA-damaging and cross-linking agents such as UVB irradiation, gamma-radiation, aphidicolin, ionizing radiation and hydroxyurea (HU), cisplatin (CDDP) and mitomycin C (MMC). Involved in cell-cycle G2/M arrest in response to DNA damage. Required for aluminum-dependent gene regulation and root growth inhibition in an ATR-dependent manner by halting cell cycle progression and triggering loss of the quiescent center (QC). In Arabidopsis thaliana (Mouse-ear cress), this protein is Protein SENSITIVE TO UV 2.